Here is an 847-residue protein sequence, read N- to C-terminus: Protein HIR2 (847 aa).

WD repeat units lie at residues 10-46 (LHDG…NAAT), 113-153 (KDNE…LKSS), 155-194 (ELKS…TTKL), 259-305 (KFSP…PLFD), and 309-348 (VVNS…LGDV). The tract at residues 368–399 (PFKPKAEEPDTKLPPNKTAQQTTTNSKKQPKA) is disordered. Over residues 384-394 (KTAQQTTTNSK) the composition is skewed to polar residues. 2 WD repeats span residues 508–548 (RKDN…IYVT) and 558–597 (PMLL…IAFP).

Belongs to the WD repeat HIR1 family.

It is found in the nucleus. Required for replication-independent chromatin assembly and for the periodic repression of histone gene transcription during the cell cycle. The sequence is that of Protein HIR2 (HIR2) from Kluyveromyces lactis (strain ATCC 8585 / CBS 2359 / DSM 70799 / NBRC 1267 / NRRL Y-1140 / WM37) (Yeast).